The chain runs to 55 residues: Large ribosomal subunit protein bL33 (55 aa).

The protein belongs to the bacterial ribosomal protein bL33 family.

The chain is Large ribosomal subunit protein bL33 from Blochmanniella pennsylvanica (strain BPEN).